A 316-amino-acid polypeptide reads, in one-letter code: MKAENNSQKDNLHPRNLHRSRYDFELLISNCPELKAFISINKHGIETVDFSNPLAVKTLNKALLQTYYDIQNWDIPKNYLCPPIPGRADYIHYLADLLAETNNGKIPEGNSVMGLDIGTGANLIYPILGNSIYNWSFVATDIYKTSIENASKIIEANPRLIDAVSLQQQTEPRFIFKNIIIPEDRFTFTMCNPPFHASAEEANKSTSRKVSNLNPKEKKNTNPVLNFGGQNAELWCNGGEIGFITQMIYESVKYASQVLWFTTLVSKKENLSSIYKTLKKVNAVSVKTIEMSQGQKNSRIVAWSFLNNTEQKSWKF.

Residues 200–222 (EEANKSTSRKVSNLNPKEKKNTN) are disordered. Positions 204–214 (KSTSRKVSNLN) are enriched in polar residues.

It belongs to the methyltransferase superfamily. METTL16/RlmF family.

The protein resides in the cytoplasm. It catalyses the reaction adenosine(1618) in 23S rRNA + S-adenosyl-L-methionine = N(6)-methyladenosine(1618) in 23S rRNA + S-adenosyl-L-homocysteine + H(+). In terms of biological role, specifically methylates the adenine in position 1618 of 23S rRNA. This Flavobacterium johnsoniae (strain ATCC 17061 / DSM 2064 / JCM 8514 / BCRC 14874 / CCUG 350202 / NBRC 14942 / NCIMB 11054 / UW101) (Cytophaga johnsonae) protein is Ribosomal RNA large subunit methyltransferase F.